The chain runs to 158 residues: Crossover junction endodeoxyribonuclease RuvC (158 aa).

Residues D7, E66, and D139 contribute to the active site. Positions 7, 66, and 139 each coordinate Mg(2+).

This sequence belongs to the RuvC family. In terms of assembly, homodimer which binds Holliday junction (HJ) DNA. The HJ becomes 2-fold symmetrical on binding to RuvC with unstacked arms; it has a different conformation from HJ DNA in complex with RuvA. In the full resolvosome a probable DNA-RuvA(4)-RuvB(12)-RuvC(2) complex forms which resolves the HJ. It depends on Mg(2+) as a cofactor.

The protein resides in the cytoplasm. It carries out the reaction Endonucleolytic cleavage at a junction such as a reciprocal single-stranded crossover between two homologous DNA duplexes (Holliday junction).. In terms of biological role, the RuvA-RuvB-RuvC complex processes Holliday junction (HJ) DNA during genetic recombination and DNA repair. Endonuclease that resolves HJ intermediates. Cleaves cruciform DNA by making single-stranded nicks across the HJ at symmetrical positions within the homologous arms, yielding a 5'-phosphate and a 3'-hydroxyl group; requires a central core of homology in the junction. The consensus cleavage sequence is 5'-(A/T)TT(C/G)-3'. Cleavage occurs on the 3'-side of the TT dinucleotide at the point of strand exchange. HJ branch migration catalyzed by RuvA-RuvB allows RuvC to scan DNA until it finds its consensus sequence, where it cleaves and resolves the cruciform DNA. In Carboxydothermus hydrogenoformans (strain ATCC BAA-161 / DSM 6008 / Z-2901), this protein is Crossover junction endodeoxyribonuclease RuvC.